Consider the following 92-residue polypeptide: Defensin (92 aa).

Positions 1-20 (MKFFVLVAIAFALLACVAQA) are cleaved as a signal peptide. Residues 21 to 52 (QPVSDVDPIPEDHVLVHEDAHQEVLQHSRQKR) constitute a propeptide that is removed on maturation. 3 disulfide bridges follow: C55–C82, C68–C88, and C72–C90.

The protein belongs to the invertebrate defensin family. Type 1 subfamily. In terms of tissue distribution, hemolymph (at protein level).

Its subcellular location is the secreted. In terms of biological role, responsible for the anti Gram-positive activity of immune hemolymph. Expressed in the absence of immune challenge during metamorphosis. This is Defensin (Def) from Drosophila melanogaster (Fruit fly).